A 69-amino-acid chain; its full sequence is Cold shock-like protein CspC (69 aa).

The 61-residue stretch at 6–66 (GQVKWFNESK…GQKGPAAVNV (61 aa)) folds into the CSD domain.

It localises to the cytoplasm. The protein is Cold shock-like protein CspC (cspC) of Escherichia coli O157:H7.